A 1114-amino-acid polypeptide reads, in one-letter code: Isoleucine--tRNA ligase (1114 aa).

The 'HIGH' region motif lies at 61–71 (PTANGQPGTHH). Positions 640-644 (KMSKH) match the 'KMSKS' region motif. Position 643 (Lys-643) interacts with ATP.

It belongs to the class-I aminoacyl-tRNA synthetase family. IleS type 2 subfamily. As to quaternary structure, monomer. Zn(2+) is required as a cofactor.

It localises to the cytoplasm. The enzyme catalyses tRNA(Ile) + L-isoleucine + ATP = L-isoleucyl-tRNA(Ile) + AMP + diphosphate. In terms of biological role, catalyzes the attachment of isoleucine to tRNA(Ile). As IleRS can inadvertently accommodate and process structurally similar amino acids such as valine, to avoid such errors it has two additional distinct tRNA(Ile)-dependent editing activities. One activity is designated as 'pretransfer' editing and involves the hydrolysis of activated Val-AMP. The other activity is designated 'posttransfer' editing and involves deacylation of mischarged Val-tRNA(Ile). This Cutibacterium acnes (strain DSM 16379 / KPA171202) (Propionibacterium acnes) protein is Isoleucine--tRNA ligase.